A 393-amino-acid polypeptide reads, in one-letter code: Formate-dependent phosphoribosylglycinamide formyltransferase (393 aa).

Residues 22 to 23 (EL) and Glu-82 each bind N(1)-(5-phospho-beta-D-ribosyl)glycinamide. ATP is bound by residues Arg-114, Lys-155, 160 to 165 (SSGKGQ), 195 to 198 (EGFI), and Glu-203. The ATP-grasp domain maps to 119–308 (RLAAEELGLP…EFALHARAIL (190 aa)). Glu-267 and Glu-279 together coordinate Mg(2+). N(1)-(5-phospho-beta-D-ribosyl)glycinamide contacts are provided by residues Asp-286, Lys-356, and 363-364 (RR).

Belongs to the PurK/PurT family. As to quaternary structure, homodimer.

It catalyses the reaction N(1)-(5-phospho-beta-D-ribosyl)glycinamide + formate + ATP = N(2)-formyl-N(1)-(5-phospho-beta-D-ribosyl)glycinamide + ADP + phosphate + H(+). It participates in purine metabolism; IMP biosynthesis via de novo pathway; N(2)-formyl-N(1)-(5-phospho-D-ribosyl)glycinamide from N(1)-(5-phospho-D-ribosyl)glycinamide (formate route): step 1/1. In terms of biological role, involved in the de novo purine biosynthesis. Catalyzes the transfer of formate to 5-phospho-ribosyl-glycinamide (GAR), producing 5-phospho-ribosyl-N-formylglycinamide (FGAR). Formate is provided by PurU via hydrolysis of 10-formyl-tetrahydrofolate. This is Formate-dependent phosphoribosylglycinamide formyltransferase from Stutzerimonas stutzeri (strain A1501) (Pseudomonas stutzeri).